The chain runs to 426 residues: Serine--tRNA ligase (426 aa).

Residue 233 to 235 coordinates L-serine; it reads TSE. An ATP-binding site is contributed by 264–266; sequence RAE. Glu-287 serves as a coordination point for L-serine. 351-354 lines the ATP pocket; it reads EISS. Ser-387 serves as a coordination point for L-serine.

Belongs to the class-II aminoacyl-tRNA synthetase family. Type-1 seryl-tRNA synthetase subfamily. Homodimer. The tRNA molecule binds across the dimer.

It localises to the cytoplasm. The catalysed reaction is tRNA(Ser) + L-serine + ATP = L-seryl-tRNA(Ser) + AMP + diphosphate + H(+). It carries out the reaction tRNA(Sec) + L-serine + ATP = L-seryl-tRNA(Sec) + AMP + diphosphate + H(+). It functions in the pathway aminoacyl-tRNA biosynthesis; selenocysteinyl-tRNA(Sec) biosynthesis; L-seryl-tRNA(Sec) from L-serine and tRNA(Sec): step 1/1. Functionally, catalyzes the attachment of serine to tRNA(Ser). Is also able to aminoacylate tRNA(Sec) with serine, to form the misacylated tRNA L-seryl-tRNA(Sec), which will be further converted into selenocysteinyl-tRNA(Sec). This is Serine--tRNA ligase from Xanthomonas euvesicatoria pv. vesicatoria (strain 85-10) (Xanthomonas campestris pv. vesicatoria).